A 45-amino-acid chain; its full sequence is Mu-conotoxin-like Cal 12.1.2c (45 aa).

4 cysteine pairs are disulfide-bonded: Cys3/Cys16, Cys11/Cys28, Cys18/Cys33, and Cys27/Cys39. Pro23 is modified (4-hydroxyproline). 6'-bromotryptophan occurs at positions 37 and 38. Pro40 carries the 4-hydroxyproline modification. 6'-bromotryptophan is present on Trp44.

As to expression, expressed by the venom duct.

Its subcellular location is the secreted. Mu-conotoxins block voltage-gated sodium channels. This toxin reversibly blocks voltage-gated sodium channel in cephalopods, with no alteration in the voltage dependence of sodium conductance or on the kinetics of inactivation. This is Mu-conotoxin-like Cal 12.1.2c from Californiconus californicus (California cone).